Consider the following 2378-residue polypeptide: MPDTKDLQYSLTGAQTGIWFAQQLDPDNPIYNTAEYIEINGPVNIALFEEALRHVIKEAESLHVRFGENMDGPWQMINPSPDVQLHVIDVSSEPDPEKTALNWMKADLAKPVDLGYAPLFNEALFIAGPDRFFWYQRIHHIAIDGFGFSLIAQRVASTYTALIKGQTAKSRSFGSLQAILEEDTDYRGSEQYEKDRQFWLDRFADAPEVVSLADRAPRTSNSFLRHTAYLPPSDVNALKEAARYFSGSWHEVMIAVSAVYVHRMTGSEDVVLGLPMMGRIGSASLNVPAMVMNLLPLRLTVSSSMSFSELIQQISREIRSIRRHHKYRHEELRRDLKLIGENHRLFGPQINLMPFDYGLDFAGVRGTTHNLSAGPVDDLSINVYDRTDGSGLRIDVDANPEVYSESDIKLHQQRILQLLQTASAGEDMLIGQMELLLPEEKEKVISKWNETAKSEKLVSLQDMFEKQAVLTPERIALMCDDIQVNYRKLNEEANRLARLLIEKGIGPEQFVALALPRSPEMVASMLGVLKTGAAYLPLDPEFPADRISYMLEDAKPSCIITTEEIAASLPDDLAVPELVLDQAVTQEIIKRYSPENQDVSVSLDHPAYIIYTSGSTGRPKGVVVTQKSLSNFLLSMQEAFSLGEEDRLLAVTTVAFDISALELYLPLISGAQIVIAKKETIREPQALAQMIENFDINIMQATPTLWHALVTSEPEKLRGLRVLVGGEALPSGLLQELQDLHCSVTNLYGPTETTIWSAAAFLEEGLKGVPPIGKPIWNTQVYVLDNGLQPVPPGVVGELYIAGTGLARGYFHRPDLTAERFVADPYGPPGTRMYRTGDQARWRADGSLDYIGRADHQIKIRGFRIELGEIDAVLANHPHIEQAAVVVREDQPGDKRLAAYVVADAAIDTAELRRYMGASLPDYMVPSAFVEMDELPLTPNGKLDRKALPAPDFSTSVSDRAPRTPQEEILCDLFAEVLGLARVGIDDSFFELGGHSLLAARLMSRIREVMGAELGIAKLFDEPTVAGLAAHLDLAQSACPALQRAERPEKIPLSFAQRRLWFLHCLEGPSPTYNIPVAVRLSGELDQGLLKAALYDLVCRHESLRTIFPESQGTSYQHILDADRACPELHVTEIAEKELSDRLAEAVRYSFDLAAEPAFRAELFVIGPDEYVLLLLVHHIVGDGWSLTPLTRDLGTAYAARCHGRSPEWAPLAVQYADYALWQQELLGNEDDPNSLIAGQLAFWKETLKNLPDQLELPTDYSRPAEPSHDGDTIHFRIEPEFHKRLQELARANRVSLFMVLQSGLAALLTRLGAGTDIPIGSPIAGRNDDALGDLVGLFINTLVLRTDTSGDPSFRELLDRVREVNLAAYDNQDLPFERLVEVLNPARSRATHPLFQIMLAFQNTPDAELHLPDMESSLRINSVGSAKFDLTLEISEDRLADGTPNGMEGLLEYSTDLFKRETAQALADRLMRLLEAAESDPDEQIGNLDILAPEEHSSMVTDWQSVSEKIPHACLPEQFEKQAALRPDAIAVVYENQELSYAELNERANRLARMMISEGVGPEQFVALALPRSLEMAVGLLAVLKAGAAYLPLDPDYPADRIAFMLKDAQPAFIMTNTKAANHIPPVENVPKIVLDDPELAEKLNTYPAGNPKNKDRTQPLSPLNTAYVIYTSGSTGVPKGVMIPHQNVTRLFAATEHWFRFSSGDIWTMFHSYAFDFSVWEIWGPLLHGGRLVIVPHHVSRSPEAFLRLLVKEGVTVLNQTPSAFYQFMQAEREQPDLGQALSLRYVIFGGEALELSRLEDWYNRHPENRPQLINMYGITETTVHVSYIELDRSMAALRANSLIGCGIPDLGVYVLDERLQPVPPGVAGELYVSGAGLARGYLGRPGLTSERFIADPFGPPGTRMYRTGDVARLRADGSLDYVGRADHQVKIRGFRIELGEIEAALVQHPQLEDAAVIVREDQPGDKRLAAYVIPSEETFDTAELRRYAAERLPDYMVPAAFVTMKELPLTPNGKLDRKALPAPDFAAAVTGRGPRTPQEEILCDLFMEVLHLPRVGIDDRFFDLGGHSLLAVQLMSRIREALGVELSIGNLFEAPTVAGLAERLEMGSSQSALDVLLPLRTSGDKPPLFCVHPAGGLSWCYAGLMTNIGTDYPIYGLQARGIGQREELPKTLDDMAADYIKQIRTVQPKGPYHLLGWSLGGNVVQAMATQLQNQGEEVSLLVMLDAYPNHFLPIKEAPDDEEALIALLALGGYDPDSLGEKPLDFEAAIEILRRDGSALASLDETVILNLKNTYVNSVGILGSYKPKTFRGNVLFFRSTIIPEWFDPIEPDSWKPYINGQIEQIDIDCRHKDLCQPEPLAQIGKVLAVKLEELNK.

2 consecutive Carrier domains span residues 961–1036 and 2036–2111; these read APRT…DLAQ and GPRT…EMGS. An O-(pantetheine 4'-phosphoryl)serine mark is found at S996 and S2071.

Belongs to the ATP-dependent AMP-binding enzyme family. The cofactor is pantetheine 4'-phosphate.

The catalysed reaction is holo-[peptidyl-carrier protein] + L-threonine + ATP = L-threonyl-[peptidyl-carrier protein] + AMP + diphosphate. It carries out the reaction holo-[peptidyl-carrier protein] + glycine + ATP = glycyl-[peptidyl-carrier protein] + AMP + diphosphate. It participates in siderophore biosynthesis; bacillibactin biosynthesis. Its function is as follows. Specifically adenylates L-threonine and, to a lesser extent, glycine and covalently loads both amino acids onto their corresponding peptidyl carrier domains. This is Dimodular nonribosomal peptide synthase (dhbF) from Bacillus subtilis (strain 168).